Here is a 437-residue protein sequence, read N- to C-terminus: Phosphoethanolamine N-methyltransferase 2 (437 aa).

N-methylethanolamine phosphate contacts are provided by residues 186–187 and Tyr195; that span reads QY. S-adenosyl-L-homocysteine is bound by residues 204–205, Gly232, Asp254, 281–282, and Arg298; these read IS and DA. N-methylethanolamine phosphate-binding positions include Tyr329, Tyr343, 347–349, and Lys415; that span reads RAY.

Belongs to the class I-like SAM-binding methyltransferase superfamily.

The catalysed reaction is N-methylethanolamine phosphate + S-adenosyl-L-methionine = N,N-dimethylethanolamine phosphate + S-adenosyl-L-homocysteine + H(+). It carries out the reaction N,N-dimethylethanolamine phosphate + S-adenosyl-L-methionine = phosphocholine + S-adenosyl-L-homocysteine + H(+). It participates in phospholipid metabolism; phosphatidylcholine biosynthesis; phosphocholine from phosphoethanolamine. Feedback inhibition by phosphatidylcholine and also by S-adenosylhomocysteine. In terms of biological role, catalyzes the last two methylation reactions in the synthesis of phosphocholine, by converting phospho-monomethylethanolamine (N-methylethanolamine phosphate) into phospho-dimethylethanolamine (N,N-dimethylethanolamine phosphate) and the latter into phosphocholine. Phosphocholine is a precursor for phosphatidylcholine, a major component in membranes and a precursor itself in the production of glycoconjugates secreted by parasitic nematodes to avoid host immune responses. The protein is Phosphoethanolamine N-methyltransferase 2 of Caenorhabditis elegans.